The following is a 937-amino-acid chain: Beta-mannosidase A (937 aa).

The N-terminal stretch at 1–23 (MRALPTTATTLLGVLFFPSASRS) is a signal peptide. 7 N-linked (GlcNAc...) asparagine glycosylation sites follow: Asn-42, Asn-82, Asn-250, Asn-285, Asn-319, Asn-329, and Asn-350. Glu-482 (proton donor) is an active-site residue. N-linked (GlcNAc...) asparagine glycosylation is found at Asn-553, Asn-612, Asn-743, and Asn-796.

The protein belongs to the glycosyl hydrolase 2 family. Beta-mannosidase A subfamily. Homodimer. Post-translationally, N-glycosylated.

The protein localises to the secreted. The enzyme catalyses Hydrolysis of terminal, non-reducing beta-D-mannose residues in beta-D-mannosides.. The protein operates within glycan metabolism; N-glycan degradation. In terms of biological role, exoglycosidase that cleaves the single beta-linked mannose residue from the non-reducing end of beta-mannosidic oligosaccharides of various complexity and length. Involved in the degradation of polymeric mannan and galactomannan. Releases the terminal mannose residue from mannotriose and is somewaht less active on other mannooligosaccharides. This Aspergillus aculeatus protein is Beta-mannosidase A (mndA).